The chain runs to 244 residues: Osmotin-like protein OSM34 (244 aa).

An N-terminal signal peptide occupies residues 1 to 22 (MANLLVSTFIFSALLLISTATA). 8 disulfide bridges follow: Cys-31–Cys-222, Cys-72–Cys-82, Cys-87–Cys-93, Cys-138–Cys-212, Cys-143–Cys-195, Cys-151–Cys-161, Cys-165–Cys-174, and Cys-175–Cys-182.

This sequence belongs to the thaumatin family.

The polypeptide is Osmotin-like protein OSM34 (OSM34) (Arabidopsis thaliana (Mouse-ear cress)).